The following is a 902-amino-acid chain: MEVQLGLGRVYPRPPSKTYRGAFQNLFQSVREAIQNPGPRHPEAASIAPPGACLQQRQETSPRRRRRQQHPEDGSPQAHIRGTTGYLALEEEQQPSQQQSASEGHPESGCLPEPGAATAPGKGLPQQPPAPPDQDDSAAPSTLSLLGPTFPGLSSCSADIKDILSEAGTMQLLQQQQQQQQQQQQQQQQQQQQQQEVISEGSSSVRAREATGAPSSSKDSYLGGNSTISDSAKELCKAVSVSMGLGVEALEHLSPGEQLRGDCMYASLLGGPPAVRPTPCAPLAECKGLSLDEGPGKGTEETAEYSSFKGGYAKGLEGESLGCSGSSEAGSSGTLEIPSSLSLYKSGAVDEAAAYQNRDYYNFPLALSGPPHPPPPTHPHARIKLENPSDYGSAWAAAAAQCRYGDLASLHGGSVAGPSTGSPPATASSSWHTLFTAEEGQLYGPGGGGGSSSPSDAGPVAPYGYTRPPQGLASQEGDFSASEVWYPGGVVNRVPYPSPSCVKSEMGPWMENYSGPYGDMRLDSTRDHVLPIDYYFPPQKTCLICGDEASGCHYGALTCGSCKVFFKRAAEGKQKYLCASRNDCTIDKFRRKNCPSCRLRKCYEAGMTLGARKLKKLGNLKLQEEGENSSAGSPTEDPSQKMTVSHIEGYECQPIFLNVLEAIEPGVVCAGHDNNQPDSFAALLSSLNELGERQLVHVVKWAKALPGFRNLHVDDQMAVIQYSWMGLMVFAMGWRSFTNVNSRMLYFAPDLVFNEYRMHKSRMYSQCVRMRHLSQEFGWLQITPQEFLCMKALLLFSIIPVDGLKNQKFFDELRMNYIKELDRIIACKRKNPTSCSRRFYQLTKLLDSVQPIARELHQFTFDLLIKSHMVSVDFPEMMAEIISVQVPKILSGKVKPIYFHTQ.

The tract at residues 1–540 is modulating; the sequence is MEVQLGLGRV…PIDYYFPPQK (540 aa). Residues 1-569 form an interaction with ZNF318 region; it reads MEVQLGLGRV…GSCKVFFKRA (569 aa). Disordered stretches follow at residues 35–146 and 194–224; these read QNPG…LSLL and QQEVISEGSSSVRAREATGAPSSSKDSYLGG. Ser-61 carries the post-translational modification Phosphoserine; by CDK9. At Ser-75 the chain carries Phosphoserine. Over residues 94 to 103 the composition is skewed to low complexity; that stretch reads QPSQQQSASE. Composition is skewed to polar residues over residues 196–205 and 213–224; these read EVISEGSSSV and APSSSKDSYLGG. Phosphotyrosine; by CSK is present on Tyr-221. The residue at position 254 (Ser-254) is a Phosphoserine. Phosphotyrosine; by CSK and TNK2 is present on Tyr-265. Ser-290 carries the phosphoserine modification. Residues Tyr-305, Tyr-344, Tyr-355, and Tyr-360 each carry the phosphotyrosine; by CSK modification. Tyr-361 carries the post-translational modification Phosphotyrosine; by CSK and TNK2. Lys-384 participates in a covalent cross-link: Glycyl lysine isopeptide (Lys-Gly) (interchain with G-Cter in SUMO). The residue at position 391 (Tyr-391) is a Phosphotyrosine; by CSK. The disordered stretch occupies residues 439-465; sequence EGQLYGPGGGGGSSSPSDAGPVAPYGY. Residue Lys-503 forms a Glycyl lysine isopeptide (Lys-Gly) (interchain with G-Cter in SUMO) linkage. 2 positions are modified to phosphotyrosine; by CSK: Tyr-517 and Tyr-534. Residues 534–901 are interaction with LPXN; it reads YYFPPQKTCL…GKVKPIYFHT (368 aa). The segment at residues 541–614 is a DNA-binding region (nuclear receptor); the sequence is TCLICGDEAS…AGMTLGARKL (74 aa). NR C4-type zinc fingers lie at residues 542 to 562 and 578 to 602; these read CLICGDEASGCHYGALTCGSC and CASRNDCTIDKFRRKNCPSCRLRKC. The interval 554-644 is interaction with HIPK3; the sequence is YGALTCGSCK…TEDPSQKMTV (91 aa). The segment at 574-901 is interaction with CCAR1; sequence QKYLCASRND…GKVKPIYFHT (328 aa). Residues 607–901 are interaction with KAT7; the sequence is MTLGARKLKK…GKVKPIYFHT (295 aa). Ser-633 bears the Phosphoserine mark. In terms of domain architecture, NR LBD spans 651-882; it reads ECQPIFLNVL…DFPEMMAEII (232 aa). 2 residues coordinate 17beta-hydroxy-5alpha-androstan-3-one: Asn-688 and Arg-735. Glycyl lysine isopeptide (Lys-Gly) (interchain with G-Cter in ubiquitin) cross-links involve residues Lys-828 and Lys-830. Thr-860 serves as a coordination point for 17beta-hydroxy-5alpha-androstan-3-one. A Phosphotyrosine; by CSK modification is found at Tyr-898.

It belongs to the nuclear hormone receptor family. NR3 subfamily. As to quaternary structure, binds DNA as a homodimer. Part of a ternary complex containing AR, EFCAB6/DJBP and PARK7. Interacts with HIPK3 and NR0B2 in the presence of androgen. The ligand binding domain interacts with KAT7/HBO1 in the presence of dihydrotestosterone. Interacts with EFCAB6/DJBP, PQBP1, RANBP9, RBAK, SPDEF, SRA1, TGFB1I1, ZNF318 and RREB1. Interacts with ZMIZ1/ZIMP10 and ZMIZ2/ZMIP7 which both enhance its transactivation activity. Interacts with SLC30A9 and RAD54L2/ARIP4. Interacts with MACROD1 (via macro domain). Interacts via the ligand-binding domain with LXXLL and FXXLF motifs from NCOA1, NCOA2, NCOA3 and MAGEA11. Interacts (via nuclear receptor DNA binding domain and nuclear receptor ligand binding domain) with NCOA4. The AR N-terminal poly-Gln region binds Ran resulting in enhancement of AR-mediated transactivation. Ran-binding decreases as the poly-Gln length increases. Interacts with HIP1 (via coiled coil domain). Interacts (via ligand-binding domain) with TRIM68. Interacts with TNK2. Interacts with USP26. Interacts with RNF6. Interacts (regulated by RNF6 probably through polyubiquitination) with RNF14; regulates AR transcriptional activity. Interacts with PRMT2 and TRIM24. Interacts with RACK1. Interacts with RANBP10; this interaction enhances dihydrotestosterone-induced AR transcriptional activity. Interacts with PRPF6 in a hormone-independent way; this interaction enhances dihydrotestosterone-induced AR transcriptional activity. Interacts with STK4/MST1. Interacts with ZIPK/DAPK3. Interacts with LPXN. Interacts with MAK. Part of a complex containing AR, MAK and NCOA3. Interacts with CRY1. Interacts with CCAR1 and GATA2. Interacts with BUD31. Interacts with ARID4A. Interacts with ARID4B. Interacts (via NR LBD domain) with ZBTB7A; the interaction is direct and androgen-dependent. Interacts with NCOR1. Interacts with NCOR2. Interacts with CRY2 in a ligand-dependent manner. Phosphorylated in prostate cancer cells in response to several growth factors including EGF. Phosphorylation is induced by c-Src kinase (CSK). Tyr-517 is one of the major phosphorylation sites and an increase in phosphorylation and Src kinase activity is associated with prostate cancer progression. Phosphorylation by TNK2 enhances the DNA-binding and transcriptional activity. Phosphorylation at Ser-61 by CDK9 regulates AR promoter selectivity and cell growth. Phosphorylation by PAK6 leads to AR-mediated transcription inhibition. Post-translationally, sumoylated on Lys-384 (major) and Lys-503. Ubiquitinated. Deubiquitinated by USP26. 'Lys-6' and 'Lys-27'-linked polyubiquitination by RNF6 modulates AR transcriptional activity and specificity. In terms of processing, palmitoylated by ZDHHC7 and ZDHHC21. Palmitoylation is required for plasma membrane targeting and for rapid intracellular signaling via ERK and AKT kinases and cAMP generation. As to expression, highest levels in the seminal vesicle, ventral prostate and coagulating gland with lower levels in the kidney and levator ani muscle.

Its subcellular location is the nucleus. The protein resides in the cytoplasm. Functionally, steroid hormone receptors are ligand-activated transcription factors that regulate eukaryotic gene expression and affect cellular proliferation and differentiation in target tissues. Transcription factor activity is modulated by bound coactivator and corepressor proteins like ZBTB7A that recruits NCOR1 and NCOR2 to the androgen response elements/ARE on target genes, negatively regulating androgen receptor signaling and androgen-induced cell proliferation. Transcription activation is also down-regulated by NR0B2. Activated, but not phosphorylated, by HIPK3 and ZIPK/DAPK3. The protein is Androgen receptor (Ar) of Rattus norvegicus (Rat).